The following is a 71-amino-acid chain: ATP synthase F(0) complex subunit e, mitochondrial (71 aa).

Lys-34 is subject to N6-acetyllysine. Phosphoserine is present on Ser-68.

This sequence belongs to the ATPase e subunit family. In terms of assembly, component of the ATP synthase complex composed at least of ATP5F1A/subunit alpha, ATP5F1B/subunit beta, ATP5MC1/subunit c (homooctomer), MT-ATP6/subunit a, MT-ATP8/subunit 8, ATP5ME/subunit e, ATP5MF/subunit f, ATP5MG/subunit g, ATP5MK/subunit k, ATP5MJ/subunit j, ATP5F1C/subunit gamma, ATP5F1D/subunit delta, ATP5F1E/subunit epsilon, ATP5PF/subunit F6, ATP5PB/subunit b, ATP5PD/subunit d, ATP5PO/subunit OSCP. ATP synthase complex consists of a soluble F(1) head domain (subunits alpha(3) and beta(3)) - the catalytic core - and a membrane F(0) domain - the membrane proton channel (subunits c, a, 8, e, f, g, k and j). These two domains are linked by a central stalk (subunits gamma, delta, and epsilon) rotating inside the F1 region and a stationary peripheral stalk (subunits F6, b, d, and OSCP).

The protein localises to the mitochondrion. It localises to the mitochondrion inner membrane. In terms of biological role, subunit e, of the mitochondrial membrane ATP synthase complex (F(1)F(0) ATP synthase or Complex V) that produces ATP from ADP in the presence of a proton gradient across the membrane which is generated by electron transport complexes of the respiratory chain. ATP synthase complex consist of a soluble F(1) head domain - the catalytic core - and a membrane F(1) domain - the membrane proton channel. These two domains are linked by a central stalk rotating inside the F(1) region and a stationary peripheral stalk. During catalysis, ATP synthesis in the catalytic domain of F(1) is coupled via a rotary mechanism of the central stalk subunits to proton translocation. In vivo, can only synthesize ATP although its ATP hydrolase activity can be activated artificially in vitro. Part of the complex F(0) domain. In Pongo abelii (Sumatran orangutan), this protein is ATP synthase F(0) complex subunit e, mitochondrial.